The primary structure comprises 59 residues: UPF0434 protein Rsph17029_0141 (59 aa).

Belongs to the UPF0434 family.

The chain is UPF0434 protein Rsph17029_0141 from Cereibacter sphaeroides (strain ATCC 17029 / ATH 2.4.9) (Rhodobacter sphaeroides).